Consider the following 160-residue polypeptide: Probable NADH dehydrogenase [ubiquinone] 1 beta subcomplex subunit 2, mitochondrial (160 aa).

Belongs to the complex I NDUFB2 subunit family. Complex I is composed of 45 different subunits.

The protein resides in the mitochondrion inner membrane. In terms of biological role, accessory subunit of the mitochondrial membrane respiratory chain NADH dehydrogenase (Complex I), that is believed not to be involved in catalysis. Complex I functions in the transfer of electrons from NADH to the respiratory chain. The immediate electron acceptor for the enzyme is believed to be ubiquinone. This Caenorhabditis elegans protein is Probable NADH dehydrogenase [ubiquinone] 1 beta subcomplex subunit 2, mitochondrial.